The primary structure comprises 366 residues: Cobalt-precorrin-5B C(1)-methyltransferase (366 aa).

It belongs to the CbiD family.

The enzyme catalyses Co-precorrin-5B + S-adenosyl-L-methionine = Co-precorrin-6A + S-adenosyl-L-homocysteine. Its pathway is cofactor biosynthesis; adenosylcobalamin biosynthesis; cob(II)yrinate a,c-diamide from sirohydrochlorin (anaerobic route): step 6/10. Functionally, catalyzes the methylation of C-1 in cobalt-precorrin-5B to form cobalt-precorrin-6A. The protein is Cobalt-precorrin-5B C(1)-methyltransferase of Methanococcus maripaludis (strain C7 / ATCC BAA-1331).